We begin with the raw amino-acid sequence, 550 residues long: MAKEVKFGRTAREKMLRGVDILADAVKVTLGPKGRNVVIEKSFGSPRTTKDGVTVAKEIELEDKFENMGAQMVKEVASKTNDTAGDGTTTATVLTQAIVREGAKSVAAGMNPMDLKRGIEIAVRTAVEDITKRSKKVKSNDEVAQVGTISANGESEIGAMIAQAMSRVGNEGVITVEEAKSLDTELDVVEGMQFDRGYLSPYFITNADKMVVELDEPLILLHEKKLTSLQPMLPVLEAVVQSGRPLLIIAEDIEGEALATLVVNKLRGGLKVAAVKAPGFGDRRKAMLEDLAVLSGGQVISEDLGIKLESVTLDMLGKAKRVSITKDDTTIVDGAGKKKDIEARVAQIKRQIEDTTSDYDKEKLQERLAKLAGGVAVIKVGGATEAEVKERKDRVDDALNATRAAVEEGIVPGGGTALLMASKAVGKLVEDNRDIQAGINIIRRALEAPIRQIVENAGVEGSIVVQKVLESKQANFGFDAQKEEYCDLVAAGIIDPTKVVRTALQDAASIAGLLITTEAMIADAPKKDNGAAAGMPGGMGGMGGMGGMDF.

Residues 29–32 (TLGP), Lys-50, 86–90 (DGTTT), Gly-414, and Asp-495 each bind ATP.

This sequence belongs to the chaperonin (HSP60) family. In terms of assembly, forms a cylinder of 14 subunits composed of two heptameric rings stacked back-to-back. Interacts with the co-chaperonin GroES.

The protein localises to the cytoplasm. The enzyme catalyses ATP + H2O + a folded polypeptide = ADP + phosphate + an unfolded polypeptide.. Together with its co-chaperonin GroES, plays an essential role in assisting protein folding. The GroEL-GroES system forms a nano-cage that allows encapsulation of the non-native substrate proteins and provides a physical environment optimized to promote and accelerate protein folding. In Parvibaculum lavamentivorans (strain DS-1 / DSM 13023 / NCIMB 13966), this protein is Chaperonin GroEL.